Reading from the N-terminus, the 859-residue chain is Sulfate permease 1 (859 aa).

N-linked (GlcNAc...) asparagine glycans are attached at residues asparagine 51 and asparagine 93. 8 consecutive transmembrane segments (helical) span residues 94-114, 116-136, 148-168, 173-193, 206-226, 234-254, 292-312, and 332-352; these read LTAKSAGSYLVSLFPIIKWFP, YNFTWGYADLVAGITVGCVLV, LSPEYGLYSSFIGAFIYSLFA, VCIGPVAVMSLQTAKVIAEVL, PIIATTLCLLCGIVATGLGIL, LISLNAVAGFMTGSAFNIIWG, FGLIPLVILYVWKWWCGTFGI, and FYFYAQAMRNAVVIVVFTAIS. N-linked (GlcNAc...) asparagine glycosylation is found at asparagine 358 and asparagine 391. 4 helical membrane passes run 395-415, 428-448, 468-488, and 525-545; these read EIPASIIVLVLEHIAISKSFG, LIAIGVTNLIGTFFHSYPATG, VFTGGCVLLALYCLTDAFFFI, and FIVTVFITVFSSIENGIYFAM. Residues asparagine 630, asparagine 653, and asparagine 718 are each glycosylated (N-linked (GlcNAc...) asparagine). The 179-residue stretch at 630 to 808 folds into the STAS domain; it reads NTTVRPPPPG…SIIAGHSSFH (179 aa).

It belongs to the SLC26A/SulP transporter (TC 2.A.53) family.

The protein localises to the membrane. In terms of biological role, high affinity uptake of sulfate into the cell. This is Sulfate permease 1 (SUL1) from Saccharomyces cerevisiae (strain ATCC 204508 / S288c) (Baker's yeast).